Reading from the N-terminus, the 200-residue chain is Ependymin-related protein 1 (200 aa).

Positions 1–17 (MILQAALFLAGLTVVSG) are cleaved as a signal peptide. 3 N-linked (GlcNAc...) asparagine glycosylation sites follow: N36, N124, and N136.

The protein belongs to the ependymin family. Component of the acid-soluble and acid-insoluble organic matrix of prismatic shell layers (at protein level). Expressed discontinuously in the anterior zone of the outer fold of the mantle where its expression correlates with shell pigmentation.

The protein resides in the secreted. This is Ependymin-related protein 1 from Haliotis asinina (Donkey's ear abalone).